Consider the following 1933-residue polypeptide: Protein TIC 214 (1933 aa).

6 helical membrane passes run isoleucine 18–glycine 38, alanine 60–leucine 80, proline 87–aspartate 107, phenylalanine 128–leucine 148, valine 176–isoleucine 196, and isoleucine 230–leucine 250. 4 disordered regions span residues alanine 266–glycine 291, lysine 473–asparagine 514, threonine 808–proline 832, and glutamate 1066–alanine 1121. Over residues glutamate 278 to glycine 289 the composition is skewed to acidic residues. The span at serine 476 to leucine 487 shows a compositional bias: polar residues. Composition is skewed to basic and acidic residues over residues glutamate 488–asparagine 514 and aspartate 819–proline 832. Polar residues predominate over residues glutamate 1066–asparagine 1078. Over residues lysine 1105–lysine 1115 the composition is skewed to basic residues. A helical membrane pass occupies residues leucine 1135 to isoleucine 1155. The interval asparagine 1562–threonine 1642 is disordered. Over residues aspartate 1564–threonine 1642 the composition is skewed to basic and acidic residues.

It belongs to the TIC214 family. As to quaternary structure, part of the Tic complex.

Its subcellular location is the plastid. It localises to the chloroplast inner membrane. Involved in protein precursor import into chloroplasts. May be part of an intermediate translocation complex acting as a protein-conducting channel at the inner envelope. This Jasminum nudiflorum (Winter jasmine) protein is Protein TIC 214.